We begin with the raw amino-acid sequence, 797 residues long: Inulosucrase (797 aa).

The signal sequence occupies residues 1 to 36 (MLENKNHKKISLSGKSLLMGTLSTAAIVLSASTANA). Positions 54–64 (ASSVNNENNKQ) are enriched in polar residues. The tract at residues 54-176 (ASSVNNENNK…SVKPAENATK (123 aa)) is disordered. Composition is skewed to basic and acidic residues over residues 65–75 (VTEKDSADKST) and 82–95 (ANTK…ETTE). Residues 130–139 (DQKTTNAATT) show a composition bias toward low complexity. Residues 140–167 (DTKKDDVKQVEKKDSVDKTNAEENKDSS) are compositionally biased toward basic and acidic residues. Residue Trp271 coordinates substrate. Residue Asp272 is the Nucleophile of the active site. Residue Asn317 participates in Ca(2+) binding. Ser340 is a substrate binding site. Asp419 provides a ligand contact to Ca(2+). Position 424–425 (424–425 (RD)) interacts with substrate. Positions 450, 487, 489, and 521 each coordinate Ca(2+). Residues 522–524 (EIE) and Arg542 each bind substrate. Glu524 (proton donor/acceptor) is an active-site residue. Ca(2+)-binding residues include Asp660, Ile662, and Ser667. Residues 708–766 (QPVTPIPNVPTTPETPTTPDKPEVPTTPEVPTTPETPTPEAPKNPVKKTSQSKLPKAGD) are disordered. Low complexity predominate over residues 718–740 (TTPETPTTPDKPEVPTTPEVPTT). An LPXTG sorting signal motif is present at residues 761 to 765 (LPKAG). A Pentaglycyl murein peptidoglycan amidated alanine modification is found at Ala764. A propeptide spans 765–797 (GDKNSFAAVVLGAVSSILGAVGLTGVSKRKRNN) (removed by sortase).

Belongs to the glycosyl hydrolase 68 family. Ca(2+) serves as cofactor.

The protein resides in the secreted. It localises to the cell wall. The catalysed reaction is [(2-&gt;1)-beta-D-fructosyl](n) + sucrose = [(2-&gt;1)-beta-D-fructosyl](n+1) + D-glucose. Fructosyltransferase that catalyzes the polymerization of the fructose moiety of sucrose to produce inulin polymer and inulin oligosaccharides such as 1-kestose and nystose. In Lactobacillus johnsonii (strain CNCM I-12250 / La1 / NCC 533), this protein is Inulosucrase.